A 340-amino-acid polypeptide reads, in one-letter code: Phosphoribosylformylglycinamidine cyclo-ligase (340 aa).

The protein belongs to the AIR synthase family.

It localises to the cytoplasm. The enzyme catalyses 2-formamido-N(1)-(5-O-phospho-beta-D-ribosyl)acetamidine + ATP = 5-amino-1-(5-phospho-beta-D-ribosyl)imidazole + ADP + phosphate + H(+). It functions in the pathway purine metabolism; IMP biosynthesis via de novo pathway; 5-amino-1-(5-phospho-D-ribosyl)imidazole from N(2)-formyl-N(1)-(5-phospho-D-ribosyl)glycinamide: step 2/2. The sequence is that of Phosphoribosylformylglycinamidine cyclo-ligase from Streptococcus pneumoniae (strain Taiwan19F-14).